The primary structure comprises 257 residues: uncharacterized protein (257 aa).

Residues 6–26 traverse the membrane as a helical segment; that stretch reads IFWLNLAAIIIISIVVSGGMF.

Belongs to the staphylococcal tandem lipoprotein family.

The protein resides in the cell membrane. This is an uncharacterized protein from Staphylococcus aureus (strain Mu50 / ATCC 700699).